The sequence spans 155 residues: Transcriptional repressor NrdR (155 aa).

A zinc finger spans residues 3–34 (CPFCGNIDTQVKDSRPAEDHVSIRRRRFCPAC). An ATP-cone domain is found at 49-139 (LVVIKSTGKR…VYKNFQAADD (91 aa)).

This sequence belongs to the NrdR family. The cofactor is Zn(2+).

In terms of biological role, negatively regulates transcription of bacterial ribonucleotide reductase nrd genes and operons by binding to NrdR-boxes. This chain is Transcriptional repressor NrdR, found in Roseobacter denitrificans (strain ATCC 33942 / OCh 114) (Erythrobacter sp. (strain OCh 114)).